Here is a 357-residue protein sequence, read N- to C-terminus: Putative ankyrin repeat protein L42 (357 aa).

ANK repeat units follow at residues 34-63, 86-115, 116-145, 147-175, 176-205, 206-235, 237-265, 267-294, and 301-331; these read SCKQ…NLKF, EQNE…DFRM, NDDE…NIRA, NNRP…SFVS, KQNE…DINV, GKIP…SINK, SVDS…EVNI, YYAF…ITKD, and NTRY…DKDK.

The sequence is that of Putative ankyrin repeat protein L42 from Acanthamoeba polyphaga (Amoeba).